The following is a 231-amino-acid chain: Ribosomal RNA large subunit methyltransferase E (231 aa).

Positions 76, 78, 99, 115, and 139 each coordinate S-adenosyl-L-methionine. Residue lysine 179 is the Proton acceptor of the active site.

This sequence belongs to the class I-like SAM-binding methyltransferase superfamily. RNA methyltransferase RlmE family.

The protein resides in the cytoplasm. It carries out the reaction uridine(2552) in 23S rRNA + S-adenosyl-L-methionine = 2'-O-methyluridine(2552) in 23S rRNA + S-adenosyl-L-homocysteine + H(+). In terms of biological role, specifically methylates the uridine in position 2552 of 23S rRNA at the 2'-O position of the ribose in the fully assembled 50S ribosomal subunit. This chain is Ribosomal RNA large subunit methyltransferase E, found in Bradyrhizobium sp. (strain BTAi1 / ATCC BAA-1182).